Here is a 321-residue protein sequence, read N- to C-terminus: HPr kinase/phosphorylase (321 aa).

Active-site residues include histidine 143 and lysine 164. Residue 158–165 participates in ATP binding; sequence GKSGVGKS. Mg(2+) is bound at residue serine 165. Aspartate 182 serves as the catalytic Proton acceptor; for phosphorylation activity. Proton donor; for dephosphorylation activity. The tract at residues 206–215 is important for the catalytic mechanism of both phosphorylation and dephosphorylation; that stretch reads MEIRGLGILN. Position 207 (glutamate 207) interacts with Mg(2+). Arginine 248 is an active-site residue. The important for the catalytic mechanism of dephosphorylation stretch occupies residues 269–274; that stretch reads PVRPGR.

The protein belongs to the HPrK/P family. Homohexamer. The cofactor is Mg(2+).

It carries out the reaction [HPr protein]-L-serine + ATP = [HPr protein]-O-phospho-L-serine + ADP + H(+). The catalysed reaction is [HPr protein]-O-phospho-L-serine + phosphate + H(+) = [HPr protein]-L-serine + diphosphate. In terms of biological role, catalyzes the ATP- as well as the pyrophosphate-dependent phosphorylation of a specific serine residue in HPr, a phosphocarrier protein of the phosphoenolpyruvate-dependent sugar phosphotransferase system (PTS). HprK/P also catalyzes the pyrophosphate-producing, inorganic phosphate-dependent dephosphorylation (phosphorolysis) of seryl-phosphorylated HPr (P-Ser-HPr). This is HPr kinase/phosphorylase from Leptospira interrogans serogroup Icterohaemorrhagiae serovar copenhageni (strain Fiocruz L1-130).